The chain runs to 253 residues: Probable transcriptional regulatory protein KRH_13670 (253 aa).

Belongs to the TACO1 family.

It localises to the cytoplasm. The chain is Probable transcriptional regulatory protein KRH_13670 from Kocuria rhizophila (strain ATCC 9341 / DSM 348 / NBRC 103217 / DC2201).